Here is a 309-residue protein sequence, read N- to C-terminus: Ornithine carbamoyltransferase (309 aa).

Residues 51–54 (STRT), Q78, R102, and 129–132 (HPVQ) each bind carbamoyl phosphate. L-ornithine contacts are provided by residues N159, D223, and 227 to 228 (SM). Carbamoyl phosphate-binding positions include 263 to 264 (CL) and R291.

It belongs to the aspartate/ornithine carbamoyltransferase superfamily. OTCase family.

It localises to the cytoplasm. It carries out the reaction carbamoyl phosphate + L-ornithine = L-citrulline + phosphate + H(+). It participates in amino-acid biosynthesis; L-arginine biosynthesis; L-arginine from L-ornithine and carbamoyl phosphate: step 1/3. In terms of biological role, reversibly catalyzes the transfer of the carbamoyl group from carbamoyl phosphate (CP) to the N(epsilon) atom of ornithine (ORN) to produce L-citrulline. In Nitratiruptor sp. (strain SB155-2), this protein is Ornithine carbamoyltransferase.